Here is a 292-residue protein sequence, read N- to C-terminus: Short chain dehydrogenase/reductase CPUR_05418 (292 aa).

NADP(+) contacts are provided by I44 and R156. Residues S172 and Y186 each act as proton donor in the active site. The NADP(+) site is built by Y186, K190, I221, and T223. Residue K190 is the Lowers pKa of active site Tyr of the active site.

The protein belongs to the short-chain dehydrogenases/reductases (SDR) family.

Its pathway is secondary metabolite biosynthesis. Its function is as follows. Short chain dehydrogenase/reductase; part of the ergochrome gene cluster responsible for the typical purple-black color of the ergot sclerotia. The ergochrome gene cluster produces several ergot pigments including the yellow ergochrome secalonic acid and its derivatives, as well as the red anthraquinones endocrocin and clavorubin. The pathway begins with the synthesis of atrochrysone thioester by the polyketide synthase (PKS) CPUR_05437. The atrochrysone carboxyl ACP thioesterase CPUR_05436 then breaks the thioester bond and releases the atrochrysone carboxylic acid from CPUR_05437. The atrochrysone carboxylic acid is then converted to atrochrysone which is further transformed into emodin anthrone. The next step is performed by the anthrone oxygenase CPUR_05434 that catalyzes the oxidation of emodinanthrone to emodin. Emodin is further modified to yield monodictyphenone via several steps involving CPUR_05427, CPUR_05428, CPUR_05429 and CPUR_05430. The short chain dehydrogenase/reductase CPUR_05418 then catalyzes the C-5 ketoreduction to give the xanthone skeleton of the monomeric units. Ergochromes formation requires further dimerization steps of different xanthone units, probably catalyzed by the cytochrome P450 monooxygenase CPUR_05419. CPUR_05425, CPUR_05426 and CPUR_05431 are unique to Claviceps, thus it is likely that they are involved in further modification of xanthone units or in their dimerization. The yellow ergochromes and the red anthraquinone pigments endocrocin and clavorubin are products from the same PKS derived precursors and the latter are likely shunt products in the pathway of xanthone biosynthesis. It is proposed that atrochrysone carboxylic acid released from the PKS CPUR_05437 can also be converted to endocrocin anthrone which is further oxidized into endocrocin by CPUR_05435. Endocrocin could be then modified to clavorubin, possibly by CPUR_05423 and CPUR_05431. Clavorubin is the principal anthraquinone metabolite produced by the cluster with a much higher yield compared to endocrocin. The sequence is that of Short chain dehydrogenase/reductase CPUR_05418 from Claviceps purpurea (strain 20.1) (Ergot fungus).